We begin with the raw amino-acid sequence, 542 residues long: Chaperonin GroEL (542 aa).

Residues 29–32 (TLGP), 86–90 (DGTTT), Gly413, 477–479 (NAA), and Asp493 each bind ATP.

The protein belongs to the chaperonin (HSP60) family. In terms of assembly, forms a cylinder of 14 subunits composed of two heptameric rings stacked back-to-back. Interacts with the co-chaperonin GroES.

Its subcellular location is the cytoplasm. The enzyme catalyses ATP + H2O + a folded polypeptide = ADP + phosphate + an unfolded polypeptide.. In terms of biological role, together with its co-chaperonin GroES, plays an essential role in assisting protein folding. The GroEL-GroES system forms a nano-cage that allows encapsulation of the non-native substrate proteins and provides a physical environment optimized to promote and accelerate protein folding. This is Chaperonin GroEL from Heliobacterium modesticaldum (strain ATCC 51547 / Ice1).